Here is a 321-residue protein sequence, read N- to C-terminus: Acetyl-coenzyme A carboxylase carboxyl transferase subunit alpha (321 aa).

The CoA carboxyltransferase C-terminal domain maps to 39–293 (RLQQKSQTLA…RRALGDSLRQ (255 aa)).

The protein belongs to the AccA family. As to quaternary structure, acetyl-CoA carboxylase is a heterohexamer composed of biotin carboxyl carrier protein (AccB), biotin carboxylase (AccC) and two subunits each of ACCase subunit alpha (AccA) and ACCase subunit beta (AccD).

The protein resides in the cytoplasm. The enzyme catalyses N(6)-carboxybiotinyl-L-lysyl-[protein] + acetyl-CoA = N(6)-biotinyl-L-lysyl-[protein] + malonyl-CoA. The protein operates within lipid metabolism; malonyl-CoA biosynthesis; malonyl-CoA from acetyl-CoA: step 1/1. Its function is as follows. Component of the acetyl coenzyme A carboxylase (ACC) complex. First, biotin carboxylase catalyzes the carboxylation of biotin on its carrier protein (BCCP) and then the CO(2) group is transferred by the carboxyltransferase to acetyl-CoA to form malonyl-CoA. The sequence is that of Acetyl-coenzyme A carboxylase carboxyl transferase subunit alpha from Bordetella avium (strain 197N).